The sequence spans 101 residues: Small ribosomal subunit protein uS14 (101 aa).

The interval 1–23 is disordered; the sequence is MAKKSSVEKNKRRRKMVAQQAPK.

The protein belongs to the universal ribosomal protein uS14 family. In terms of assembly, part of the 30S ribosomal subunit. Contacts proteins S3 and S10.

Its function is as follows. Binds 16S rRNA, required for the assembly of 30S particles and may also be responsible for determining the conformation of the 16S rRNA at the A site. In Rhodospirillum centenum (strain ATCC 51521 / SW), this protein is Small ribosomal subunit protein uS14.